Here is a 401-residue protein sequence, read N- to C-terminus: Keratin-associated protein 10-4 (401 aa).

Repeat copies occupy residues 36 to 40, 41 to 45, 46 to 50, 67 to 71, 89 to 93, 99 to 103, 109 to 113, 114 to 118, 119 to 123, 124 to 128, 129 to 133, 135 to 139, 145 to 149, 155 to 159, 160 to 164, 172 to 176, 186 to 190, 208 to 212, 218 to 222, 228 to 232, 233 to 237, 238 to 242, 250 to 254, 270 to 274, 275 to 279, 280 to 284, 297 to 301, 307 to 311, 317 to 321, 322 to 326, 339 to 343, 349 to 353, 354 to 358, 373 to 377, and 391 to 395. A 36 X 5 AA repeats of C-C-X(3) region spans residues 36–395; the sequence is CCEPPCCAPS…SCQPSCCRPA (360 aa).

Belongs to the KRTAP type 10 family. Interacts with hair keratins. In terms of tissue distribution, restricted to hair root, not detected in any other tissues.

In terms of biological role, in the hair cortex, hair keratin intermediate filaments are embedded in an interfilamentous matrix, consisting of hair keratin-associated proteins (KRTAP), which are essential for the formation of a rigid and resistant hair shaft through their extensive disulfide bond cross-linking with abundant cysteine residues of hair keratins. The matrix proteins include the high-sulfur and high-glycine-tyrosine keratins. In Homo sapiens (Human), this protein is Keratin-associated protein 10-4 (KRTAP10-4).